The following is a 422-amino-acid chain: MTVFFKTLRNHWKKTTAGLCLLTWGGHWLYGKHCDNLLRRAACQEAQVFGNQLIPPNAQVKKATVFLNPAACKGKARTLFEKNAAPILHLCGMDVTIVKTDYEGQAKKLLELMENTDVIIVAGGDGTLQEVVTGVLRRTDEATFSKIPIGFIPLGETSSLSHTLFAESGNKVQHITDATLAIVKGETVPLDVLQIKGEKEQPVFAMTGLRWGSFRDAGVKVSKYWYLGPLKIKAAHFFSTLKEWPQTHQASISYTGPTERPPSEPEETPVQRPSLYRRILRRLASYWAQPQDALSQEVSPEVWKDVQLSTIELSITTRNNQLDPTSKEDFLNICIEPDTISKGDFITIGSRKVRNPKLHAEGTECLQASQCTLLIPEGAGGSFSIDSEEYEAMPVEVKLLPRKLQFFCDPRKREQMLTSPAQ.

Lys-6 is modified (N6-acetyllysine). The interval 15–31 (TTAGLCLLTWGGHWLYG) is hydrophobic. Positions 58–199 (AQVKKATVFL…LDVLQIKGEK (142 aa)) constitute a DAGKc domain. Residues 249 to 271 (QASISYTGPTERPPSEPEETPVQ) are disordered.

The protein belongs to the AGK family. In terms of assembly, component of the TIM22 complex, which core is composed of TIMM22, associated with TIMM10 (TIMM10A and/or TIMM10B), TIMM9, AGK and TIMM29. Interacts with SMIM26. Mg(2+) serves as cofactor.

The protein resides in the mitochondrion inner membrane. Its subcellular location is the mitochondrion intermembrane space. The catalysed reaction is a monoacylglycerol + ATP = a monoacyl-sn-glycero-3-phosphate + ADP + H(+). The enzyme catalyses a 1,2-diacyl-sn-glycerol + ATP = a 1,2-diacyl-sn-glycero-3-phosphate + ADP + H(+). It catalyses the reaction an N-acylsphing-4-enine + ATP = an N-acylsphing-4-enine 1-phosphate + ADP + H(+). It carries out the reaction 1-(9Z-octadecenoyl)-sn-glycerol + ATP = 1-(9Z-octadecenoyl)-sn-glycero-3-phosphate + ADP + H(+). The catalysed reaction is 1,2-di-(9Z-octadecenoyl)-sn-glycerol + ATP = 1,2-di-(9Z-octadecenoyl)-sn-glycero-3-phosphate + ADP + H(+). The enzyme catalyses a 1-acyl-sn-glycerol + ATP = a 1-acyl-sn-glycero-3-phosphate + ADP + H(+). It catalyses the reaction 1-hexadecanoyl-sn-glycerol + ATP = 1-hexadecanoyl-sn-glycero-3-phosphate + ADP + H(+). It carries out the reaction a 2-acylglycerol + ATP = a 2-acyl-sn-glycerol 3-phosphate + ADP + H(+). The catalysed reaction is 2-(5Z,8Z,11Z,14Z-eicosatetraenoyl)-glycerol + ATP = 2-(5Z,8Z,11Z,14Z-eicosatetraenoyl)-sn-glycero-3-phosphate + ADP + H(+). The enzyme catalyses 1-(5Z,8Z,11Z,14Z-eicosatetraenoyl)-sn-glycerol + ATP = 1-(5Z,8Z,11Z,14Z-eicosatetraenoyl)-sn-glycero-3-phosphate + ADP + H(+). It catalyses the reaction N-(hexanoyl)sphing-4-enine + ATP = N-hexanoylsphing-4-enine 1-phosphate + ADP + H(+). The protein operates within lipid metabolism; glycerolipid metabolism. Functionally, lipid kinase that can phosphorylate both monoacylglycerol and diacylglycerol to form lysophosphatidic acid (LPA) and phosphatidic acid (PA), respectively. Phosphorylates ceramide but not sphingosine. Phosphorylates 1,2-dioleoylglycerol more rapidly than 2,3-dioleoylglycerol. Independently of its lipid kinase activity, acts as a component of the TIM22 complex. The TIM22 complex mediates the import and insertion of multi-pass transmembrane proteins into the mitochondrial inner membrane by forming a twin-pore translocase that uses the membrane potential as the external driving force. In the TIM22 complex, required for the import of a subset of metabolite carriers into mitochondria, such as ANT1/SLC25A4 and SLC25A24, while it is not required for the import of TIMM23. Overexpression increases the formation and secretion of LPA, resulting in transactivation of EGFR and activation of the downstream MAPK signaling pathway, leading to increased cell growth. The polypeptide is Acylglycerol kinase, mitochondrial (Pongo abelii (Sumatran orangutan)).